Here is a 169-residue protein sequence, read N- to C-terminus: Crossover junction endodeoxyribonuclease RuvC (169 aa).

Residues Asp-12, Glu-72, and Asp-144 contribute to the active site. The Mg(2+) site is built by Asp-12, Glu-72, and Asp-144.

The protein belongs to the RuvC family. As to quaternary structure, homodimer which binds Holliday junction (HJ) DNA. The HJ becomes 2-fold symmetrical on binding to RuvC with unstacked arms; it has a different conformation from HJ DNA in complex with RuvA. In the full resolvosome a probable DNA-RuvA(4)-RuvB(12)-RuvC(2) complex forms which resolves the HJ. Mg(2+) is required as a cofactor.

It localises to the cytoplasm. It carries out the reaction Endonucleolytic cleavage at a junction such as a reciprocal single-stranded crossover between two homologous DNA duplexes (Holliday junction).. In terms of biological role, the RuvA-RuvB-RuvC complex processes Holliday junction (HJ) DNA during genetic recombination and DNA repair. Endonuclease that resolves HJ intermediates. Cleaves cruciform DNA by making single-stranded nicks across the HJ at symmetrical positions within the homologous arms, yielding a 5'-phosphate and a 3'-hydroxyl group; requires a central core of homology in the junction. The consensus cleavage sequence is 5'-(A/T)TT(C/G)-3'. Cleavage occurs on the 3'-side of the TT dinucleotide at the point of strand exchange. HJ branch migration catalyzed by RuvA-RuvB allows RuvC to scan DNA until it finds its consensus sequence, where it cleaves and resolves the cruciform DNA. This chain is Crossover junction endodeoxyribonuclease RuvC, found in Xanthobacter autotrophicus (strain ATCC BAA-1158 / Py2).